We begin with the raw amino-acid sequence, 261 residues long: Thiamine thiazole synthase (261 aa).

Residues Ala-33, 52–53 (ER), Gly-60, Val-124, and 152–154 (HVD) each bind NAD(+). Asp-154 and His-169 together coordinate Fe cation. Met-219 lines the NAD(+) pocket. A glycine-binding site is contributed by Arg-229.

It belongs to the THI4 family. In terms of assembly, homooctamer; tetramer of dimers. Fe(2+) serves as cofactor.

It carries out the reaction hydrogen sulfide + glycine + NAD(+) = ADP-5-ethyl-4-methylthiazole-2-carboxylate + nicotinamide + 3 H2O + H(+). The protein operates within cofactor biosynthesis; thiamine diphosphate biosynthesis. In terms of biological role, involved in the biosynthesis of the thiazole moiety of thiamine. Catalyzes the conversion of NAD and glycine to adenosine diphosphate 5-(2-hydroxyethyl)-4-methylthiazole-2-carboxylate (ADT), an adenylated thiazole intermediate, using free sulfide as a source of sulfur. In Pyrobaculum islandicum (strain DSM 4184 / JCM 9189 / GEO3), this protein is Thiamine thiazole synthase.